A 343-amino-acid chain; its full sequence is Lumican (343 aa).

The N-terminal stretch at 1 to 18 (MTLNSLPIFLVLISGIFC) is a signal peptide. Gln19 bears the Pyrrolidone carboxylic acid mark. A sulfotyrosine mark is found at Tyr20 and Tyr22. An LRRNT domain is found at 31–69 (DPFGPSTAVCAPECNCPLSYPTAMYCDNLKLKTIPIVPS). LRR repeat units lie at residues 70 to 91 (GIKY…TFDN), 94 to 117 (DLQW…VFSK), 120 to 140 (NLKK…PLPK), 141 to 162 (TLDD…ALEG), 165 to 186 (NLTV…GAFK), 190 to 211 (SLLY…LPHS), 212 to 232 (LLML…YFQG), and 235 to 255 (TLQY…PGNV). Asn91 carries N-linked (GlcNAc...) (keratan sulfate) asparagine glycosylation. The N-linked (GlcNAc...) (keratan sulfate) asparagine glycan is linked to Asn130. N-linked (GlcNAc...) (keratan sulfate) asparagine glycosylation occurs at Asn165. A glycan (N-linked (GlcNAc...) (keratan sulfate) asparagine) is linked at Asn257. 3 LRR repeats span residues 260 to 281 (SLVE…SENL), 282 to 301 (ENFY…SFCK), and 310 to 330 (KITH…PQEM). The cysteines at positions 300 and 333 are disulfide-linked. The N-linked (GlcNAc...) asparagine glycan is linked to Asn320.

It belongs to the small leucine-rich proteoglycan (SLRP) family. SLRP class II subfamily. In terms of assembly, binds to laminin. Contains keratan sulfate.

Its subcellular location is the secreted. The protein resides in the extracellular space. It localises to the extracellular matrix. This chain is Lumican (LUM), found in Coturnix japonica (Japanese quail).